The following is a 256-amino-acid chain: 7-cyano-7-deazaguanine synthase (256 aa).

The disordered stretch occupies residues 1-22 (MTDASADALTSPSNSGASQDTS). Positions 8–22 (ALTSPSNSGASQDTS) are enriched in polar residues. 30-40 (LSGGLDSVTCL) serves as a coordination point for ATP. Cys-220, Cys-230, Cys-233, and Cys-236 together coordinate Zn(2+).

This sequence belongs to the QueC family. It depends on Zn(2+) as a cofactor.

It carries out the reaction 7-carboxy-7-deazaguanine + NH4(+) + ATP = 7-cyano-7-deazaguanine + ADP + phosphate + H2O + H(+). It functions in the pathway purine metabolism; 7-cyano-7-deazaguanine biosynthesis. Catalyzes the ATP-dependent conversion of 7-carboxy-7-deazaguanine (CDG) to 7-cyano-7-deazaguanine (preQ(0)). The polypeptide is 7-cyano-7-deazaguanine synthase (Psychrobacter sp. (strain PRwf-1)).